The sequence spans 267 residues: V-type proton ATPase subunit D (267 aa).

The protein belongs to the V-ATPase D subunit family. V-ATPase is a heteromultimeric enzyme composed of a peripheral catalytic V1 complex (components A to H) attached to an integral membrane V0 proton pore complex (components: a, c, c', c'', d, e, f and VOA1).

It is found in the vacuole membrane. Its function is as follows. Subunit of the V1 complex of vacuolar(H+)-ATPase (V-ATPase), a multisubunit enzyme composed of a peripheral complex (V1) that hydrolyzes ATP and a membrane integral complex (V0) that translocates protons. V-ATPase is responsible for acidifying and maintaining the pH of intracellular compartments. This chain is V-type proton ATPase subunit D (VMA8), found in Candida albicans (strain SC5314 / ATCC MYA-2876) (Yeast).